The sequence spans 609 residues: Glutamine--fructose-6-phosphate aminotransferase [isomerizing] (609 aa).

The active-site Nucleophile; for GATase activity is the Cys2. Residues 2-218 (CGIVGAIAQR…EGDIAEITRR (217 aa)) form the Glutamine amidotransferase type-2 domain. 2 SIS domains span residues 286 to 426 (ADEL…LKGL) and 458 to 599 (LAED…VDQP). Lys604 functions as the For Fru-6P isomerization activity in the catalytic mechanism.

As to quaternary structure, homodimer.

It is found in the cytoplasm. The catalysed reaction is D-fructose 6-phosphate + L-glutamine = D-glucosamine 6-phosphate + L-glutamate. Functionally, catalyzes the first step in hexosamine metabolism, converting fructose-6P into glucosamine-6P using glutamine as a nitrogen source. The chain is Glutamine--fructose-6-phosphate aminotransferase [isomerizing] from Salmonella paratyphi A (strain ATCC 9150 / SARB42).